We begin with the raw amino-acid sequence, 382 residues long: Anhydro-N-acetylmuramic acid kinase (382 aa).

Position 22 to 29 (22 to 29 (GTSMDGVD)) interacts with ATP.

Belongs to the anhydro-N-acetylmuramic acid kinase family.

It catalyses the reaction 1,6-anhydro-N-acetyl-beta-muramate + ATP + H2O = N-acetyl-D-muramate 6-phosphate + ADP + H(+). It participates in amino-sugar metabolism; 1,6-anhydro-N-acetylmuramate degradation. Its pathway is cell wall biogenesis; peptidoglycan recycling. Functionally, catalyzes the specific phosphorylation of 1,6-anhydro-N-acetylmuramic acid (anhMurNAc) with the simultaneous cleavage of the 1,6-anhydro ring, generating MurNAc-6-P. Is required for the utilization of anhMurNAc either imported from the medium or derived from its own cell wall murein, and thus plays a role in cell wall recycling. This chain is Anhydro-N-acetylmuramic acid kinase, found in Burkholderia ambifaria (strain ATCC BAA-244 / DSM 16087 / CCUG 44356 / LMG 19182 / AMMD) (Burkholderia cepacia (strain AMMD)).